The following is a 694-amino-acid chain: Elongation factor G (694 aa).

Residues 8-282 (DRLRNIGIMA…AIVDYLPSPL (275 aa)) enclose the tr-type G domain. GTP-binding positions include 17-24 (AHIDAGKT), 81-85 (DTPGH), and 135-138 (NKMD). A disordered region spans residues 284-303 (IPPVQGTDPETGEPAERKAD).

This sequence belongs to the TRAFAC class translation factor GTPase superfamily. Classic translation factor GTPase family. EF-G/EF-2 subfamily.

Its subcellular location is the cytoplasm. Functionally, catalyzes the GTP-dependent ribosomal translocation step during translation elongation. During this step, the ribosome changes from the pre-translocational (PRE) to the post-translocational (POST) state as the newly formed A-site-bound peptidyl-tRNA and P-site-bound deacylated tRNA move to the P and E sites, respectively. Catalyzes the coordinated movement of the two tRNA molecules, the mRNA and conformational changes in the ribosome. In Symbiobacterium thermophilum (strain DSM 24528 / JCM 14929 / IAM 14863 / T), this protein is Elongation factor G.